The following is a 72-amino-acid chain: UPF0270 protein YheU (72 aa).

This sequence belongs to the UPF0270 family.

This is UPF0270 protein YheU from Salmonella arizonae (strain ATCC BAA-731 / CDC346-86 / RSK2980).